We begin with the raw amino-acid sequence, 215 residues long: [PSI+] inducibility protein 3 (215 aa).

Serine 2 carries the N-acetylserine modification. Phosphoserine occurs at positions 52 and 55. An SH3 domain is found at 54-113 (ASLEYVEALYQFDPQQDGDLGLKPGDKVQLLEKLSPEWYKGSCNGRTGIFPANYVKPAFS). A Glycyl lysine isopeptide (Lys-Gly) (interchain with G-Cter in ubiquitin) cross-link involves residue lysine 80. Residues 114–189 (GSNGPSNLPP…HQSSHSHLKS (76 aa)) form a disordered region. The PY motif motif lies at 124-127 (PPQY).

This sequence belongs to the LSB1 family. As to quaternary structure, interacts with LAS17, RSP5 and SUP35. Post-translationally, ubiquitinated by RSP5. Ubiquitination reduces the protein abundance and its prion-inducing ability.

The protein localises to the cytoplasm. It localises to the nucleus. Its subcellular location is the cytoskeleton. The protein resides in the actin patch. Its function is as follows. Overproduction promotes the de novo induction of the [PSI+] prion form of SUP35. The prion-inducing effect depends on the association with the actin cytoskeleton. Also implicated in prion maintenance during heat stress. This Saccharomyces cerevisiae (strain ATCC 204508 / S288c) (Baker's yeast) protein is [PSI+] inducibility protein 3 (PIN3).